Reading from the N-terminus, the 93-residue chain is Acylphosphatase (93 aa).

The region spanning 6-93 is the Acylphosphatase-like domain; it reads RAHILVSGEV…GDLGPFSVRH (88 aa). Residues Arg21 and Asn39 contribute to the active site.

Belongs to the acylphosphatase family.

The catalysed reaction is an acyl phosphate + H2O = a carboxylate + phosphate + H(+). This Anaeromyxobacter sp. (strain Fw109-5) protein is Acylphosphatase (acyP).